The primary structure comprises 259 residues: Acyl-[acyl-carrier-protein]--UDP-N-acetylglucosamine O-acyltransferase (259 aa).

The protein belongs to the transferase hexapeptide repeat family. LpxA subfamily. Homotrimer.

It is found in the cytoplasm. The enzyme catalyses a (3R)-hydroxyacyl-[ACP] + UDP-N-acetyl-alpha-D-glucosamine = a UDP-3-O-[(3R)-3-hydroxyacyl]-N-acetyl-alpha-D-glucosamine + holo-[ACP]. Its pathway is glycolipid biosynthesis; lipid IV(A) biosynthesis; lipid IV(A) from (3R)-3-hydroxytetradecanoyl-[acyl-carrier-protein] and UDP-N-acetyl-alpha-D-glucosamine: step 1/6. In terms of biological role, involved in the biosynthesis of lipid A, a phosphorylated glycolipid that anchors the lipopolysaccharide to the outer membrane of the cell. The polypeptide is Acyl-[acyl-carrier-protein]--UDP-N-acetylglucosamine O-acyltransferase (Akkermansia muciniphila (strain ATCC BAA-835 / DSM 22959 / JCM 33894 / BCRC 81048 / CCUG 64013 / CIP 107961 / Muc)).